Here is a 113-residue protein sequence, read N- to C-terminus: HIG1 domain-containing protein C25B8.07c, mitochondrial (113 aa).

Positions 1–27 (MSSKLPKKSEENLELPTFPASEESLSR) are disordered. Residues 12–103 (NLELPTFPAS…PPRREAPSNS (92 aa)) form the HIG1 domain. 2 consecutive transmembrane segments (helical) span residues 39 to 59 (PFIP…GYYI) and 75 to 95 (VMSQ…IGPP).

The protein localises to the mitochondrion membrane. This Schizosaccharomyces pombe (strain 972 / ATCC 24843) (Fission yeast) protein is HIG1 domain-containing protein C25B8.07c, mitochondrial.